The primary structure comprises 204 residues: ATP phosphoribosyltransferase (204 aa).

Belongs to the ATP phosphoribosyltransferase family. Short subfamily. In terms of assembly, heteromultimer composed of HisG and HisZ subunits.

Its subcellular location is the cytoplasm. It carries out the reaction 1-(5-phospho-beta-D-ribosyl)-ATP + diphosphate = 5-phospho-alpha-D-ribose 1-diphosphate + ATP. The protein operates within amino-acid biosynthesis; L-histidine biosynthesis; L-histidine from 5-phospho-alpha-D-ribose 1-diphosphate: step 1/9. Functionally, catalyzes the condensation of ATP and 5-phosphoribose 1-diphosphate to form N'-(5'-phosphoribosyl)-ATP (PR-ATP). Has a crucial role in the pathway because the rate of histidine biosynthesis seems to be controlled primarily by regulation of HisG enzymatic activity. The polypeptide is ATP phosphoribosyltransferase (Staphylococcus aureus (strain Mu3 / ATCC 700698)).